A 185-amino-acid chain; its full sequence is Ribosome-recycling factor (185 aa).

This sequence belongs to the RRF family.

The protein resides in the cytoplasm. Functionally, responsible for the release of ribosomes from messenger RNA at the termination of protein biosynthesis. May increase the efficiency of translation by recycling ribosomes from one round of translation to another. In Francisella philomiragia subsp. philomiragia (strain ATCC 25017 / CCUG 19701 / FSC 153 / O#319-036), this protein is Ribosome-recycling factor.